Consider the following 904-residue polypeptide: Translation initiation factor IF-2 (904 aa).

Disordered stretches follow at residues 103 to 122 (YVKS…PDEE), 137 to 252 (NLEE…MVAG), and 267 to 315 (HLSA…FERP). Positions 137 to 177 (NLEEQQRLAESDRVRDEAIQRKREEEQAAKDRAEAERKAAE) are enriched in basic and acidic residues. 2 stretches are compositionally biased toward low complexity: residues 178–230 (EAAA…AAPA) and 280–293 (RGKP…SSSR). Residues 403-572 (SRPPVVTIMG…SLQAEVLELK (170 aa)) form the tr-type G domain. A G1 region spans residues 412–419 (GHVDHGKT). GTP is bound at residue 412–419 (GHVDHGKT). A G2 region spans residues 437–441 (GITQH). The tract at residues 458 to 461 (DTPG) is G3. Residues 458-462 (DTPGH) and 512-515 (NKID) each bind GTP. Positions 512–515 (NKID) are G4. The tract at residues 548–550 (SAK) is G5.

The protein belongs to the TRAFAC class translation factor GTPase superfamily. Classic translation factor GTPase family. IF-2 subfamily.

The protein resides in the cytoplasm. Its function is as follows. One of the essential components for the initiation of protein synthesis. Protects formylmethionyl-tRNA from spontaneous hydrolysis and promotes its binding to the 30S ribosomal subunits. Also involved in the hydrolysis of GTP during the formation of the 70S ribosomal complex. This Xanthomonas euvesicatoria pv. vesicatoria (strain 85-10) (Xanthomonas campestris pv. vesicatoria) protein is Translation initiation factor IF-2.